The sequence spans 92 residues: Small ribosomal subunit protein uS19c (92 aa).

Belongs to the universal ribosomal protein uS19 family.

It is found in the plastid. The protein resides in the chloroplast. Protein S19 forms a complex with S13 that binds strongly to the 16S ribosomal RNA. The chain is Small ribosomal subunit protein uS19c from Nephroselmis olivacea (Green alga).